The primary structure comprises 338 residues: Large ribosomal subunit protein uL10 (338 aa).

Residues 297–338 (PSAQQTQTQQSTAEEKKEEKKEEEKKGPSEEEIGSGLASLFG) form a disordered region. Residues 298 to 308 (SAQQTQTQQST) are compositionally biased toward low complexity. The segment covering 309 to 325 (AEEKKEEKKEEEKKGPS) has biased composition (basic and acidic residues).

Belongs to the universal ribosomal protein uL10 family. As to quaternary structure, part of the 50S ribosomal subunit. Forms part of the ribosomal stalk which helps the ribosome interact with GTP-bound translation factors. Forms a heptameric L10(L12)2(L12)2(L12)2 complex, where L10 forms an elongated spine to which the L12 dimers bind in a sequential fashion.

Functionally, forms part of the ribosomal stalk, playing a central role in the interaction of the ribosome with GTP-bound translation factors. The chain is Large ribosomal subunit protein uL10 from Saccharolobus islandicus (strain Y.N.15.51 / Yellowstone #2) (Sulfolobus islandicus).